The following is a 200-amino-acid chain: Probable molybdenum cofactor guanylyltransferase (200 aa).

GTP contacts are provided by residues 9 to 11, Lys-21, Asp-69, and Asp-100; that span reads LAG. Residue Asp-100 participates in Mg(2+) binding.

The protein belongs to the MobA family. Requires Mg(2+) as cofactor.

It localises to the cytoplasm. The catalysed reaction is Mo-molybdopterin + GTP + H(+) = Mo-molybdopterin guanine dinucleotide + diphosphate. Transfers a GMP moiety from GTP to Mo-molybdopterin (Mo-MPT) cofactor (Moco or molybdenum cofactor) to form Mo-molybdopterin guanine dinucleotide (Mo-MGD) cofactor. The protein is Probable molybdenum cofactor guanylyltransferase of Bacillus cereus (strain G9842).